The sequence spans 381 residues: MASPTQGQVITCKAAVAYEPNKPLVIEDVQVAPPQAGEVRVKILFTALCHTDHYTWSGKDPEGLFPCILGHEAAGIVESVGEGVTDVQPGDHVIPCYQAECKECKFCKSGKTNLCGKVRSATGVGVMMNDMKSRFSVNGKPIYHFMGTSTFSQYTVVHDVSVAKINPQAPLDKVCLLGCGVPTGLGAVWNTAKVESGSVVAVFGLGTVGLAVAEGAKAAGASRVIGIDIDNKKFDVAKNFGVTEFVNPKEHDKPIQQVLVDLTDGGVDYSFECIGNVSIMRAALECSDKGWGTSVIVGVAASGQEISTRPFQLVTGRVWKGTAFGGFKSRTQVPWLVDKYMKKEIKVDEYITHNMNLADINDAFHLLHEGGCLRCVLAMQI.

Position 49 (cysteine 49) interacts with Zn(2+). Residue histidine 50 participates in NAD(+) binding. Threonine 51 and histidine 71 together coordinate an alcohol. Positions 71, 72, 101, 104, 107, 115, and 179 each coordinate Zn(2+). NAD(+)-binding positions include 204–209 (GLGTVG), aspartate 228, lysine 233, isoleucine 274, 297–299 (VGV), 322–324 (TAF), and arginine 374.

This sequence belongs to the zinc-containing alcohol dehydrogenase family. Class-III subfamily. Homodimer. It depends on Zn(2+) as a cofactor. As to expression, expressed at low levels in the leaves.

It localises to the cytoplasm. It carries out the reaction a primary alcohol + NAD(+) = an aldehyde + NADH + H(+). The enzyme catalyses a secondary alcohol + NAD(+) = a ketone + NADH + H(+). The catalysed reaction is S-(hydroxymethyl)glutathione + NADP(+) = S-formylglutathione + NADPH + H(+). It catalyses the reaction S-(hydroxymethyl)glutathione + NAD(+) = S-formylglutathione + NADH + H(+). The protein is Alcohol dehydrogenase class-3 (FDH) of Zea mays (Maize).